The chain runs to 87 residues: Small ribosomal subunit protein bS16 (87 aa).

It belongs to the bacterial ribosomal protein bS16 family.

In Variovorax paradoxus (strain S110), this protein is Small ribosomal subunit protein bS16.